Reading from the N-terminus, the 337-residue chain is U11/U12 small nuclear ribonucleoprotein 48 kDa protein (337 aa).

A CHHC U11-48K-type zinc finger spans residues 55 to 82 (IAICPYDSNHRMPKSSLTKHMESCRLRK). 4 residues coordinate Zn(2+): Cys-58, His-64, His-74, and Cys-78. Residues Lys-87 and Lys-104 each participate in a glycyl lysine isopeptide (Lys-Gly) (interchain with G-Cter in SUMO2) cross-link. Basic and acidic residues predominate over residues 255–276 (HWQEEQGRAGDAAEKNEERRSA). The disordered stretch occupies residues 255–337 (HWQEEQGRAG…HSHKRRKQKI (83 aa)). Residues 294-310 (RHRRARSRSPHKRKRNK) are compositionally biased toward basic residues. Basic and acidic residues predominate over residues 311–326 (DKSSESRRRKERDGER). Over residues 327 to 337 (HHSHKRRKQKI) the composition is skewed to basic residues.

Component of the U11/U12 snRNPs that are part of the U12-type spliceosome. Not found in the major spliceosome.

It is found in the nucleus. Likely involved in U12-type 5' splice site recognition. The chain is U11/U12 small nuclear ribonucleoprotein 48 kDa protein (Snrnp48) from Mus musculus (Mouse).